The chain runs to 338 residues: 3-dehydroquinate synthase (338 aa).

NAD(+)-binding positions include 58–63 (DGERAK), 92–96 (GTTGD), 116–117 (TT), Lys129, and Lys138. Zn(2+) is bound by residues Glu169, His229, and His245.

It belongs to the sugar phosphate cyclases superfamily. Dehydroquinate synthase family. It depends on NAD(+) as a cofactor. Co(2+) serves as cofactor. Requires Zn(2+) as cofactor.

The protein localises to the cytoplasm. It carries out the reaction 7-phospho-2-dehydro-3-deoxy-D-arabino-heptonate = 3-dehydroquinate + phosphate. It participates in metabolic intermediate biosynthesis; chorismate biosynthesis; chorismate from D-erythrose 4-phosphate and phosphoenolpyruvate: step 2/7. Functionally, catalyzes the conversion of 3-deoxy-D-arabino-heptulosonate 7-phosphate (DAHP) to dehydroquinate (DHQ). This Picrophilus torridus (strain ATCC 700027 / DSM 9790 / JCM 10055 / NBRC 100828 / KAW 2/3) protein is 3-dehydroquinate synthase.